The following is a 35-amino-acid chain: Photosystem II reaction center protein T (35 aa).

Residues 3–23 form a helical membrane-spanning segment; sequence ALVYTFLLXSTLGIIFFAIFF.

Belongs to the PsbT family. PSII is composed of 1 copy each of membrane proteins PsbA, PsbB, PsbC, PsbD, PsbE, PsbF, PsbH, PsbI, PsbJ, PsbK, PsbL, PsbM, PsbT, PsbY, PsbZ, Psb30/Ycf12, at least 3 peripheral proteins of the oxygen-evolving complex and a large number of cofactors. It forms dimeric complexes.

The protein resides in the plastid. Its subcellular location is the chloroplast thylakoid membrane. Found at the monomer-monomer interface of the photosystem II (PS II) dimer, plays a role in assembly and dimerization of PSII. PSII is a light-driven water plastoquinone oxidoreductase, using light energy to abstract electrons from H(2)O, generating a proton gradient subsequently used for ATP formation. The chain is Photosystem II reaction center protein T from Cunninghamia lanceolata (China fir).